The following is a 251-amino-acid chain: Ditrans,polycis-undecaprenyl-diphosphate synthase ((2E,6E)-farnesyl-diphosphate specific) (251 aa).

Residue Asp26 is part of the active site. Asp26 is a binding site for Mg(2+). Substrate is bound by residues 27–30 (GNGR), Trp31, Arg39, His43, and 71–73 (SSE). Asn74 functions as the Proton acceptor in the catalytic mechanism. Residues Trp75, Arg77, Arg194, and 200–202 (RIS) contribute to the substrate site. Position 213 (Glu213) interacts with Mg(2+).

Belongs to the UPP synthase family. As to quaternary structure, homodimer. It depends on Mg(2+) as a cofactor.

The enzyme catalyses 8 isopentenyl diphosphate + (2E,6E)-farnesyl diphosphate = di-trans,octa-cis-undecaprenyl diphosphate + 8 diphosphate. Functionally, catalyzes the sequential condensation of isopentenyl diphosphate (IPP) with (2E,6E)-farnesyl diphosphate (E,E-FPP) to yield (2Z,6Z,10Z,14Z,18Z,22Z,26Z,30Z,34E,38E)-undecaprenyl diphosphate (di-trans,octa-cis-UPP). UPP is the precursor of glycosyl carrier lipid in the biosynthesis of bacterial cell wall polysaccharide components such as peptidoglycan and lipopolysaccharide. The polypeptide is Ditrans,polycis-undecaprenyl-diphosphate synthase ((2E,6E)-farnesyl-diphosphate specific) (Buchnera aphidicola subsp. Acyrthosiphon pisum (strain APS) (Acyrthosiphon pisum symbiotic bacterium)).